Here is a 483-residue protein sequence, read N- to C-terminus: Aspartyl/glutamyl-tRNA(Asn/Gln) amidotransferase subunit B (483 aa).

It belongs to the GatB/GatE family. GatB subfamily. In terms of assembly, heterotrimer of A, B and C subunits.

The enzyme catalyses L-glutamyl-tRNA(Gln) + L-glutamine + ATP + H2O = L-glutaminyl-tRNA(Gln) + L-glutamate + ADP + phosphate + H(+). The catalysed reaction is L-aspartyl-tRNA(Asn) + L-glutamine + ATP + H2O = L-asparaginyl-tRNA(Asn) + L-glutamate + ADP + phosphate + 2 H(+). Functionally, allows the formation of correctly charged Asn-tRNA(Asn) or Gln-tRNA(Gln) through the transamidation of misacylated Asp-tRNA(Asn) or Glu-tRNA(Gln) in organisms which lack either or both of asparaginyl-tRNA or glutaminyl-tRNA synthetases. The reaction takes place in the presence of glutamine and ATP through an activated phospho-Asp-tRNA(Asn) or phospho-Glu-tRNA(Gln). In Rickettsia bellii (strain RML369-C), this protein is Aspartyl/glutamyl-tRNA(Asn/Gln) amidotransferase subunit B.